The following is a 109-amino-acid chain: Cell division protein ZapA (109 aa).

Residues 21–99 (PEQRDALNQA…IEQALLEQGR (79 aa)) adopt a coiled-coil conformation.

It belongs to the ZapA family. Type 1 subfamily. Homodimer. Interacts with FtsZ.

It is found in the cytoplasm. Functionally, activator of cell division through the inhibition of FtsZ GTPase activity, therefore promoting FtsZ assembly into bundles of protofilaments necessary for the formation of the division Z ring. It is recruited early at mid-cell but it is not essential for cell division. This is Cell division protein ZapA from Cronobacter sakazakii (strain ATCC BAA-894) (Enterobacter sakazakii).